Reading from the N-terminus, the 217-residue chain is 2-C-methyl-D-erythritol 4-phosphate cytidylyltransferase (217 aa).

Belongs to the IspD/TarI cytidylyltransferase family. IspD subfamily.

It catalyses the reaction 2-C-methyl-D-erythritol 4-phosphate + CTP + H(+) = 4-CDP-2-C-methyl-D-erythritol + diphosphate. Its pathway is isoprenoid biosynthesis; isopentenyl diphosphate biosynthesis via DXP pathway; isopentenyl diphosphate from 1-deoxy-D-xylulose 5-phosphate: step 2/6. In terms of biological role, catalyzes the formation of 4-diphosphocytidyl-2-C-methyl-D-erythritol from CTP and 2-C-methyl-D-erythritol 4-phosphate (MEP). The sequence is that of 2-C-methyl-D-erythritol 4-phosphate cytidylyltransferase from Chlamydia abortus (strain DSM 27085 / S26/3) (Chlamydophila abortus).